The primary structure comprises 239 residues: Uridylate kinase (239 aa).

10 to 13 (KFSG) serves as a coordination point for ATP. Residues 18–23 (GENGFG) are involved in allosteric activation by GTP. Gly52 is a UMP binding site. Residues Gly53 and Arg57 each coordinate ATP. UMP-binding positions include Asp73 and 134–141 (TGNPYFTT). ATP contacts are provided by Thr161, Tyr167, and Asp170.

It belongs to the UMP kinase family. In terms of assembly, homohexamer.

The protein localises to the cytoplasm. It catalyses the reaction UMP + ATP = UDP + ADP. It participates in pyrimidine metabolism; CTP biosynthesis via de novo pathway; UDP from UMP (UMPK route): step 1/1. Its activity is regulated as follows. Allosterically activated by GTP. Inhibited by UTP. Catalyzes the reversible phosphorylation of UMP to UDP. This is Uridylate kinase from Campylobacter jejuni subsp. doylei (strain ATCC BAA-1458 / RM4099 / 269.97).